The chain runs to 114 residues: UPF0342 protein LVIS_1488 (114 aa).

It belongs to the UPF0342 family.

The chain is UPF0342 protein LVIS_1488 from Levilactobacillus brevis (strain ATCC 367 / BCRC 12310 / CIP 105137 / JCM 1170 / LMG 11437 / NCIMB 947 / NCTC 947) (Lactobacillus brevis).